Consider the following 431-residue polypeptide: Indole diterpene prenyltransferase nodD1 (431 aa).

85–86 (FI) serves as a coordination point for L-tryptophan. R107, K194, R268, K270, Y272, and Y353 together coordinate substrate.

It belongs to the tryptophan dimethylallyltransferase family.

It functions in the pathway secondary metabolite biosynthesis. Indole diterpene prenyltransferase; part of the gene cluster that mediates the biosynthesis of the indole diterpenes nodulisporic acids (NA). Nodulisporic acid A (NAA) and its chemically modified derivatives are of particular significance because of their highly potent insecticidal activity against blood-feeding arthropods and lack of observable adverse effects on mammals, in particular the tremogenicity associated with the paspaline-derived IDTs is not observed. The geranylgeranyl diphosphate (GGPP) synthase ggs1, localized outside of the cluster, is proposed to catalyze the first step in nodulisporic acid biosynthesis via conversion of farnesyl pyrophosphate and isopentyl pyrophosphate into geranylgeranyl pyrophosphate (GGPP). Condensation of indole-3-glycerol phosphate with GGPP by the prenyl transferase nodC then forms 3-geranylgeranylindole (3-GGI). Epoxidation by the FAD-dependent monooxygenase nodM leads to a single-epoxidized-GGI that is substrate of the terpene cyclase nodB for cyclization to yield emindole SB. The terminal methyl carbon, C28, of emindole SB is then oxidized by the cytochrome P450 monooxygenase nodW to produce nodulisporic acid F (NAF), the pentacyclic core of NAA. NAF is converted to nodulisporic acid E (NAE) via prenylation. This step is probably performed by one of the indole diterpene prenyltransferases nodD1 or nodD2. Several oxidation steps performed by the FAD-linked oxidoreductase nodO and one of the cytochrome P450 monooxygenase nodR, nodX or nodZ further convert NAE to nodulisporic acid D (NAD). NAD is substrate of cytochrome P450 monooxygenase nodJ to produce the precursor of nodulisporic acid C (NAC), converted to NAC by one of the indole diterpene prenyltransferases nodD1 or nodD2. The FAD-dependent monooxygenase nodY2 then oxidizes NAC to nodulisporic acid B (NAB). Finally NAB is converted to NAA by one of the cytochrome P450 monooxygenases nodR, nodX or nodZ. The sequence is that of Indole diterpene prenyltransferase nodD1 from Hypoxylon pulicicidum.